Consider the following 430-residue polypeptide: Adenylosuccinate synthetase (430 aa).

Residues 12-18 (GDEGKGK) and 40-42 (GHT) each bind GTP. Residue D13 is the Proton acceptor of the active site. Positions 13 and 40 each coordinate Mg(2+). IMP contacts are provided by residues 13–16 (DEGK), 38–41 (NAGH), T128, R142, Q223, T238, and R302. Catalysis depends on H41, which acts as the Proton donor. Residue 298–304 (TTTGRPR) coordinates substrate. GTP is bound by residues R304, 330–332 (SID), and 413–415 (SVG).

Belongs to the adenylosuccinate synthetase family. Homodimer. It depends on Mg(2+) as a cofactor.

The protein resides in the cytoplasm. The enzyme catalyses IMP + L-aspartate + GTP = N(6)-(1,2-dicarboxyethyl)-AMP + GDP + phosphate + 2 H(+). It participates in purine metabolism; AMP biosynthesis via de novo pathway; AMP from IMP: step 1/2. In terms of biological role, plays an important role in the de novo pathway of purine nucleotide biosynthesis. Catalyzes the first committed step in the biosynthesis of AMP from IMP. The polypeptide is Adenylosuccinate synthetase (Lactococcus lactis subsp. cremoris (strain SK11)).